The primary structure comprises 1391 residues: DNA-directed RNA polymerase subunit beta'' (1391 aa).

Zn(2+) is bound by residues Cys220, Cys291, Cys298, and Cys301.

The protein belongs to the RNA polymerase beta' chain family. RpoC2 subfamily. As to quaternary structure, in plastids the minimal PEP RNA polymerase catalytic core is composed of four subunits: alpha, beta, beta', and beta''. When a (nuclear-encoded) sigma factor is associated with the core the holoenzyme is formed, which can initiate transcription. Zn(2+) serves as cofactor.

Its subcellular location is the plastid. The protein resides in the chloroplast. It catalyses the reaction RNA(n) + a ribonucleoside 5'-triphosphate = RNA(n+1) + diphosphate. Its function is as follows. DNA-dependent RNA polymerase catalyzes the transcription of DNA into RNA using the four ribonucleoside triphosphates as substrates. This chain is DNA-directed RNA polymerase subunit beta'', found in Gossypium barbadense (Sea Island cotton).